The following is a 597-amino-acid chain: Aspartate--tRNA(Asp/Asn) ligase (597 aa).

E175 contacts L-aspartate. Residues 199–202 (QQYK) are aspartate. 2 residues coordinate L-aspartate: R221 and H456. ATP is bound at residue 221–223 (RDE). ATP is bound at residue E490. An L-aspartate-binding site is contributed by R497. 542–545 (GVDR) is a binding site for ATP.

This sequence belongs to the class-II aminoacyl-tRNA synthetase family. Type 1 subfamily. Homodimer.

It is found in the cytoplasm. It catalyses the reaction tRNA(Asx) + L-aspartate + ATP = L-aspartyl-tRNA(Asx) + AMP + diphosphate. In terms of biological role, aspartyl-tRNA synthetase with relaxed tRNA specificity since it is able to aspartylate not only its cognate tRNA(Asp) but also tRNA(Asn). Reaction proceeds in two steps: L-aspartate is first activated by ATP to form Asp-AMP and then transferred to the acceptor end of tRNA(Asp/Asn). The chain is Aspartate--tRNA(Asp/Asn) ligase from Beijerinckia indica subsp. indica (strain ATCC 9039 / DSM 1715 / NCIMB 8712).